Consider the following 356-residue polypeptide: Protein RecA (356 aa).

ATP is bound at residue 68–75; that stretch reads GQESSGKT.

The protein belongs to the RecA family.

It localises to the cytoplasm. Can catalyze the hydrolysis of ATP in the presence of single-stranded DNA, the ATP-dependent uptake of single-stranded DNA by duplex DNA, and the ATP-dependent hybridization of homologous single-stranded DNAs. It interacts with LexA causing its activation and leading to its autocatalytic cleavage. The protein is Protein RecA of Thermotoga maritima (strain ATCC 43589 / DSM 3109 / JCM 10099 / NBRC 100826 / MSB8).